The chain runs to 87 residues: Mu-theraphotoxin-Hs1a (87 aa).

A signal peptide spans 1–24 (MVNMKASMFLTFAGLVLLFVVCYA). Positions 25 to 52 (SESEEKEFPKEMLSSIFAVDNDFKQEER) are excised as a propeptide. 3 cysteine pairs are disulfide-bonded: cysteine 54-cysteine 67, cysteine 61-cysteine 72, and cysteine 66-cysteine 79.

This sequence belongs to the neurotoxin 10 (Hwtx-1) family. 51 (Hntx-8) subfamily. Hntx-8 sub-subfamily. In terms of tissue distribution, expressed by the venom gland.

The protein resides in the secreted. Probable sodium channel pore blocker that dose-dependently inhibits voltage-gated sodium channels (VGSC) on DUM neurons in a way similar to tetrodotoxin. Has no effect on the kinetics of activation and inactivation. Seems not to interact with VGSC in an inactivated state. In vivo, reversibly paralyzes cockroaches, and can enhance the muscular contraction elicited by stimulating its nerve. This chain is Mu-theraphotoxin-Hs1a, found in Cyriopagopus schmidti (Chinese bird spider).